We begin with the raw amino-acid sequence, 297 residues long: HTH-type transcriptional regulator ArgP (297 aa).

One can recognise an HTH lysR-type domain in the interval Pro4–Thr60. The H-T-H motif DNA-binding region spans Phe21–Lys40.

Belongs to the LysR transcriptional regulatory family. Homodimer.

Its function is as follows. Controls the transcription of genes involved in arginine and lysine metabolism. This chain is HTH-type transcriptional regulator ArgP, found in Escherichia coli O7:K1 (strain IAI39 / ExPEC).